A 463-amino-acid chain; its full sequence is Elongation factor 1-alpha 2 (463 aa).

N,N,N-trimethylglycine is present on Gly-2. The region spanning 5–242 (KTHINIVVIG…DTILPPTRPT (238 aa)) is the tr-type G domain. Residues 14–21 (GHVDSGKS) are G1. The GTP site is built by Asp-17, Ser-18, Gly-19, Lys-20, Ser-21, and Thr-22. Mg(2+) is bound at residue Asp-17. Residue Lys-36 is modified to N6,N6,N6-trimethyllysine; alternate. Lys-36 is modified (N6,N6-dimethyllysine; alternate). Lys-36 carries the post-translational modification N6-methyllysine; alternate. Lys-55 carries the post-translational modification N6,N6,N6-trimethyllysine. Lys-55 is modified (N6,N6-dimethyllysine). The segment at 70–74 (GITID) is G2. Lys-79 is modified (N6,N6,N6-trimethyllysine). The G3 stretch occupies residues 91 to 94 (DAPG). Asn-153, Lys-154, and Asp-156 together coordinate GTP. The tract at residues 153-156 (NKMD) is G4. Ser-163 carries the post-translational modification Phosphoserine. An N6,N6-dimethyllysine; alternate modification is found at Lys-165. Position 165 is an N6-methyllysine; alternate (Lys-165). Lys-165 bears the N6,N6,N6-trimethyllysine; alternate; by EEF1AKMT3 mark. Lys-179 bears the N6-acetyllysine mark. 3 residues coordinate GTP: Ser-194, Gly-195, and Trp-196. The tract at residues 194–196 (SGW) is G5. Ser-224 is subject to Phosphoserine. Thr-239 is modified (phosphothreonine). Residues Glu-301 and Glu-374 each carry the 5-glutamyl glycerylphosphorylethanolamine modification. The residue at position 439 (Lys-439) is an N6-acetyllysine. Residues 444-463 (KSGGAGKVTKSAQKAQKAGK) are disordered.

The protein belongs to the TRAFAC class translation factor GTPase superfamily. Classic translation factor GTPase family. EF-Tu/EF-1A subfamily. As to quaternary structure, homodimer; arranged in a 'head to tail' dimer configuration. In terms of processing, trimethylated at Lys-165 by EEF1AKMT3. Mono-, di-, and trimethylated at Lys-36 by EEF1AKMT4; trimethylated form is predominant. Methylation by EEF1AKMT4 contributes to the fine-tuning of translation rates for a subset of tRNAs. Trimethylated at the N-terminus and dimethylated at Lys-55 by METTL13.

It is found in the endoplasmic reticulum membrane. It catalyses the reaction GTP + H2O = GDP + phosphate + H(+). In terms of biological role, translation elongation factor that catalyzes the GTP-dependent binding of aminoacyl-tRNA (aa-tRNA) to the A-site of ribosomes during the elongation phase of protein synthesis. Base pairing between the mRNA codon and the aa-tRNA anticodon promotes GTP hydrolysis, releasing the aa-tRNA from EEF1A1 and allowing its accommodation into the ribosome. The growing protein chain is subsequently transferred from the P-site peptidyl tRNA to the A-site aa-tRNA, extending it by one amino acid through ribosome-catalyzed peptide bond formation. In Bos taurus (Bovine), this protein is Elongation factor 1-alpha 2 (EEF1A2).